The chain runs to 319 residues: Mas-related G-protein coupled receptor member D (319 aa).

Residues 1–30 (MNYTPYSSPAPGLTISPTMDPVTWVYFSVT) lie on the Extracellular side of the membrane. The chain crosses the membrane as a helical span at residues 31 to 51 (FLAMATCVCGIVGNSMVIWLL). The Cytoplasmic segment spans residues 52–64 (SFHRVQRSPFCTY). The chain crosses the membrane as a helical span at residues 65–85 (VLNLAVADLLFLLCMASLLSL). Residues 86–92 (ETGPLLT) are Extracellular-facing. Residues 93-113 (ASTSARVYEGMKRIKYFAYTA) traverse the membrane as a helical segment. At 114–144 (GLSLLTAISTQRCLSVLFPIWYKCHRPQHLS) the chain is on the cytoplasmic side. Residues 145 to 165 (GVVCGVLWALALLMNFLASFF) traverse the membrane as a helical segment. Residues 166–184 (CVQFWHPDKYQCFKVDMVF) are Extracellular-facing. A helical membrane pass occupies residues 185 to 205 (NSLILGIFMPVMVLTSAIIFI). At 206 to 220 (RMRKNSLLQRRQPRR) the chain is on the cytoplasmic side. The helical transmembrane segment at 221 to 241 (LYVVILTSVLVFLTCSLPLGI) threads the bilayer. Residues 242-260 (NWFLLYWVELPQAVRLLYV) lie on the Extracellular side of the membrane. Residues 261–281 (CSSRFSSSLSSSANPVIYFLV) form a helical membrane-spanning segment. Topologically, residues 282–319 (GSQKSHRLQESLGAVLGRALQDEPEGRETPSTCTNDGV) are cytoplasmic.

The protein belongs to the G-protein coupled receptor 1 family. Mas subfamily. As to expression, co-expressed in the small diameter neurons with P2X3 and VR1 in dorsal root ganglia.

It is found in the cell membrane. Its function is as follows. May regulate nociceptor function and/or development, including the sensation or modulation of pain. Functions as a specific membrane receptor for beta-alanine. The receptor couples with G-protein G(q) and G(i). This Rattus norvegicus (Rat) protein is Mas-related G-protein coupled receptor member D (Mrgprd).